The sequence spans 193 residues: Sarcoplasmic calcium-binding protein (193 aa).

EF-hand domains follow at residues 16–40, 57–92, and 101–136; these read MYDI…NTLI, IMSN…LCCG, and CFKT…RSAF. D18, D20, N22, Y24, D29, D70, N72, D74, Q76, E81, D114, N116, D118, and E125 together coordinate Ca(2+).

In terms of assembly, monomer and dimer. In terms of tissue distribution, skeletal muscle (at protein level).

Functionally, like parvalbumins, SCPs seem to be more abundant in fast contracting muscles, but no functional relationship can be established from this distribution. This Scylla paramamosain (Mud crab) protein is Sarcoplasmic calcium-binding protein.